A 332-amino-acid chain; its full sequence is SLAM family member 6 (332 aa).

A signal peptide spans 1-21 (MLWLFQSLLFVFCFGPGNVVS). At 22–226 (QSSLTPLMVN…VKIQYTDTKM (205 aa)) the chain is on the extracellular side. The region spanning 35–120 (GESVTLPLEF…ISTKTSAKLS (86 aa)) is the Ig-like V-type domain. N-linked (GlcNAc...) asparagine glycosylation is found at Asn58, Asn87, Asn137, Asn144, Asn161, Asn178, and Asn203. Positions 132 to 209 (NIQVTNHSQL…AVSNLSFSVS (78 aa)) constitute an Ig-like C2-type domain. 2 disulfides stabilise this stretch: Cys147-Cys214 and Cys153-Cys195. A helical membrane pass occupies residues 227-247 (ILFMVSGICIVFGFIILLLLV). Residues 248-331 (LRKRRDSLSL…FSRATALDNV (84 aa)) are Cytoplasmic-facing. Tyr274 is subject to Phosphotyrosine. Phosphoserine is present on Ser278. 2 consecutive short sequence motifs (ITSM) follow at residues 283–288 (TVYASV) and 307–312 (TIYSTI). Tyr309 carries the phosphotyrosine modification.

Homodimer. Interacts with PTN6. Interacts (phosphorylated) with PTN11. Interacts (phosphorylated on tyrosine residues) with SH2D1A/SAP and SH2D1B/EAT2; SH2D1A and SH2D1B can associate with the same SLAMF6 molecule; interaction with SH2D1B is mediated by ITSM 2. Phosphorylation in NK cells upon engagment by SLAMF6-expressing target cells is leading to receptor activation. Expressed by all (resting and activated) natural killer cells (NK), T- and B-lymphocytes. Increased surface expression on T-cells of systemic lupus erythematosus (SLE) patients.

It localises to the cell membrane. In terms of biological role, self-ligand receptor of the signaling lymphocytic activation molecule (SLAM) family. SLAM receptors triggered by homo- or heterotypic cell-cell interactions are modulating the activation and differentiation of a wide variety of immune cells and thus are involved in the regulation and interconnection of both innate and adaptive immune response. Activities are controlled by presence or absence of small cytoplasmic adapter proteins, SH2D1A/SAP and/or SH2D1B/EAT-2. Triggers cytolytic activity only in natural killer cells (NK) expressing high surface densities of natural cytotoxicity receptors. Positive signaling in NK cells implicates phosphorylation of VAV1. NK cell activation seems to depend on SH2D1B and not on SH2D1A. In conjunction with SLAMF1 controls the transition between positive selection and the subsequent expansion and differentiation of the thymocytic natural killer T (NKT) cell lineage. Promotes T-cell differentiation into a helper T-cell Th17 phenotype leading to increased IL-17 secretion; the costimulatory activity requires SH2D1A. Promotes recruitment of RORC to the IL-17 promoter. In conjunction with SLAMF1 and CD84/SLAMF5 may be a negative regulator of the humoral immune response. In the absence of SH2D1A/SAP can transmit negative signals to CD4(+) T-cells and NKT cells. Negatively regulates germinal center formation by inhibiting T-cell:B-cell adhesion; the function probably implicates increased association with PTPN6/SHP-1 via ITSMs in absence of SH2D1A/SAP. However, reported to be involved in maintaining B-cell tolerance in germinal centers and in preventing autoimmunity. This is SLAM family member 6 (SLAMF6) from Homo sapiens (Human).